Reading from the N-terminus, the 83-residue chain is MSGTTGERPFSDILTSIRYWVIHSITVPSLFIAGWLFVSTGLAYDVFGSPRPNEYFTEDRQETPLITDRFEALSQVKSQSEIK.

Residues 21–35 (VIHSITVPSLFIAGW) form a helical membrane-spanning segment. His23 contributes to the heme binding site.

It belongs to the PsbE/PsbF family. In terms of assembly, heterodimer of an alpha subunit and a beta subunit. PSII is composed of 1 copy each of membrane proteins PsbA, PsbB, PsbC, PsbD, PsbE, PsbF, PsbH, PsbI, PsbJ, PsbK, PsbL, PsbM, PsbT, PsbX, PsbY, PsbZ, Psb30/Ycf12, at least 3 peripheral proteins of the oxygen-evolving complex and a large number of cofactors. It forms dimeric complexes. Heme b is required as a cofactor.

It localises to the plastid. The protein resides in the chloroplast thylakoid membrane. Its function is as follows. This b-type cytochrome is tightly associated with the reaction center of photosystem II (PSII). PSII is a light-driven water:plastoquinone oxidoreductase that uses light energy to abstract electrons from H(2)O, generating O(2) and a proton gradient subsequently used for ATP formation. It consists of a core antenna complex that captures photons, and an electron transfer chain that converts photonic excitation into a charge separation. The chain is Cytochrome b559 subunit alpha from Oltmannsiellopsis viridis (Marine flagellate).